The following is a 72-amino-acid chain: Alpha-elapitoxin-Djk2a (72 aa).

5 disulfides stabilise this stretch: Cys3-Cys21, Cys14-Cys42, Cys27-Cys31, Cys46-Cys57, and Cys58-Cys63.

Belongs to the three-finger toxin family. Long-chain subfamily. Type II alpha-neurotoxin sub-subfamily. As to expression, expressed by the venom gland.

The protein resides in the secreted. In terms of biological role, binds with high affinity to muscular (alpha-1/CHRNA1) and neuronal (alpha-7/CHRNA7) nicotinic acetylcholine receptor (nAChR) and inhibits acetylcholine from binding to the receptor, thereby impairing neuromuscular and neuronal transmission. The polypeptide is Alpha-elapitoxin-Djk2a (Dendroaspis jamesoni kaimosae (Eastern Jameson's mamba)).